The chain runs to 90 residues: MRSASLILFVAIVALTYARSYEDIKEEIRNEVENEILDDLEEENDELDDNAQEVSDPRARRWRRAFRRIRIRQVVPYIPHIIKAYQTGKK.

The first 18 residues, 1-18 (MRSASLILFVAIVALTYA), serve as a signal peptide directing secretion. Positions 19-59 (RSYEDIKEEIRNEVENEILDDLEEENDELDDNAQEVSDPRA) are excised as a propeptide. Position 87 is a threonine amide (threonine 87).

It belongs to the arminin family. Expressed in entodermal epithelium along the body column.

The protein resides in the secreted. The protein localises to the target cell membrane. In terms of biological role, antimicrobial peptide with a broad-spectrum antimicrobial activity. Keeps its antibacterial activity under a wide range of salt concentrations that mimic physiological conditions of human blood, which is surprising, since Hydra is an obligate freshwater animal with nearly no salt tolerance. Does not affect red blood cells. This is Arminin 7722 from Hydra vulgaris (Hydra).